Reading from the N-terminus, the 178-residue chain is CASP-like protein 2A2 (178 aa).

Residues Met1 to Thr22 lie on the Cytoplasmic side of the membrane. Residues Val23–Ile43 form a helical membrane-spanning segment. The Extracellular segment spans residues Lys44 to Asn69. The helical transmembrane segment at Gly70–Ile90 threads the bilayer. Over Ser91–Arg96 the chain is Cytoplasmic. Residues Thr97–Ala117 form a helical membrane-spanning segment. The Extracellular portion of the chain corresponds to Glu118–Lys145. The chain crosses the membrane as a helical span at residues Ala146–Ile166. The Cytoplasmic portion of the chain corresponds to Ser167–Pro178.

It belongs to the Casparian strip membrane proteins (CASP) family. As to quaternary structure, homodimer and heterodimers.

The protein localises to the cell membrane. This is CASP-like protein 2A2 from Arabidopsis lyrata subsp. lyrata (Lyre-leaved rock-cress).